A 171-amino-acid chain; its full sequence is 3-hydroxydecanoyl-[acyl-carrier-protein] dehydratase (171 aa).

Residue His-70 is part of the active site.

This sequence belongs to the thioester dehydratase family. FabA subfamily. Homodimer.

The protein localises to the cytoplasm. The enzyme catalyses a (3R)-hydroxyacyl-[ACP] = a (2E)-enoyl-[ACP] + H2O. It catalyses the reaction (3R)-hydroxydecanoyl-[ACP] = (2E)-decenoyl-[ACP] + H2O. The catalysed reaction is (2E)-decenoyl-[ACP] = (3Z)-decenoyl-[ACP]. The protein operates within lipid metabolism; fatty acid biosynthesis. Functionally, necessary for the introduction of cis unsaturation into fatty acids. Catalyzes the dehydration of (3R)-3-hydroxydecanoyl-ACP to E-(2)-decenoyl-ACP and then its isomerization to Z-(3)-decenoyl-ACP. Can catalyze the dehydratase reaction for beta-hydroxyacyl-ACPs with saturated chain lengths up to 16:0, being most active on intermediate chain length. The chain is 3-hydroxydecanoyl-[acyl-carrier-protein] dehydratase from Stenotrophomonas maltophilia (strain K279a).